The chain runs to 374 residues: 4-galactosyl-N-acetylglucosaminide 3-alpha-L-fucosyltransferase FUT5 (374 aa).

Residues 1–15 are Cytoplasmic-facing; the sequence is MDPLGPAKPQWLWRR. A helical; Signal-anchor for type II membrane protein transmembrane segment spans residues 16–34; the sequence is CLAGLLFQLLVAVCFFSYL. Residues 35-374 are Lumenal-facing; the sequence is RVSRDDATGS…TVRSIAAWFT (340 aa). 4 N-linked (GlcNAc...) asparagine glycosylation sites follow: N60, N105, N167, and N198.

This sequence belongs to the glycosyltransferase 10 family. In terms of tissue distribution, liver, colon and testis and trace amounts in T-cells and brain.

The protein resides in the golgi apparatus. It is found in the golgi stack membrane. The enzyme catalyses a beta-D-galactosyl-(1-&gt;3)-N-acetyl-beta-D-glucosaminyl derivative + GDP-beta-L-fucose = a beta-D-galactosyl-(1-&gt;3)-[alpha-L-fucosyl-(1-&gt;4)]-N-acetyl-beta-D-glucosaminyl derivative + GDP + H(+). The catalysed reaction is an N-acetyl-alpha-neuraminyl-(2-&gt;3)-beta-D-galactosyl-(1-&gt;4)-N-acetyl-beta-D-glucosaminyl derivative + GDP-beta-L-fucose = an alpha-Neu5Ac-(2-&gt;3)-beta-D-Gal-(1-&gt;4)-[alpha-L-Fuc-(1-&gt;3)]-beta-D-GlcNAc derivative + GDP + H(+). It catalyses the reaction an alpha-Neu5Ac-(2-&gt;3)-beta-D-Gal-(1-&gt;4)-beta-D-GlcNAc-(1-&gt;3)-beta-D-Gal-(1-&gt;4)-[alpha-L-Fuc-(1-&gt;3)]-beta-D-GlcNAc derivative + GDP-beta-L-fucose = an alpha-Neu5Ac-(2-&gt;3)-beta-D-Gal-(1-&gt;4)-[alpha-L-Fuc-(1-&gt;3)]-beta-D-GlcNAc-(1-&gt;3)-beta-D-Gal-(1-&gt;4)-[alpha-L-Fuc-(1-&gt;3)]-beta-D-GlcNAc derivative + GDP + H(+). It carries out the reaction a beta-D-galactosyl-(1-&gt;4)-N-acetyl-beta-D-glucosaminyl derivative + GDP-beta-L-fucose = a beta-D-galactosyl-(1-&gt;4)-[alpha-L-fucosyl-(1-&gt;3)]-N-acetyl-beta-D-glucosaminyl derivative + GDP + H(+). The enzyme catalyses a neolactoside nLc4Cer + GDP-beta-L-fucose = a neolactoside III(3)-alpha-Fuc-nLc4Cer + GDP + H(+). The catalysed reaction is a neolactoside nLc6Cer + GDP-beta-L-fucose = beta-D-galactosyl-(1-&gt;4)-N-acetyl-beta-D-glucosaminyl-(1-&gt;3)-beta-D-galactosyl-(1-&gt;4)-[alpha-L-fucosyl-(1-&gt;3)]-N-acetyl-beta-D-glucosaminyl-(1-&gt;3)-beta-D-galactosyl-(1-&gt;4)-beta-D-glucosyl-(1&lt;-&gt;1')-ceramide + GDP + H(+). It catalyses the reaction a neolactoside nLc6Cer(d18:1(4E)) + GDP-beta-L-fucose = a neolactoside III(3)-alpha-Fuc-nLc6Cer(d18:1(4E)) + GDP + H(+). It carries out the reaction a neolactoside nLc4Cer(d18:1(4E)) + GDP-beta-L-fucose = a neolactoside III(3)-alpha-Fuc-nLc4Cer(d18:1(4E)) + GDP + H(+). The enzyme catalyses a neolactoside VI(3)-alpha-NeuNAc-nLc6Cer + GDP-beta-L-fucose = a neolactoside VI(3)-alpha-NeuAc,III(3)-alphaFuc-nLc6Cer + GDP + H(+). The catalysed reaction is beta-D-galactosyl-(1-&gt;4)-N-acetyl-D-glucosamine + GDP-beta-L-fucose = beta-D-galactosyl-(1-&gt;4)-[alpha-L-fucosyl-(1-&gt;3)]-N-acetyl-D-glucosamine + GDP + H(+). It catalyses the reaction N-acetyl-alpha-neuraminosyl-(2-&gt;3)-beta-D-galactosyl-(1-&gt;4)-N-acetyl-beta-D-glucosamine + GDP-beta-L-fucose = N-acetyl-alpha-neuraminosyl-(2-&gt;3)-beta-D-galactosyl-(1-&gt;4)-[alpha-L-fucosyl-(1-&gt;3)]-N-acetyl-beta-D-glucosamine + GDP + H(+). It carries out the reaction alpha-L-Fuc-(1-&gt;2)-beta-D-Gal-(1-&gt;4)-D-GlcNAc + GDP-beta-L-fucose = alpha-L-Fuc-(1-&gt;2)-beta-D-Gal-(1-&gt;4)-[alpha-L-Fuc-(1-&gt;3)]-D-GlcNAc + GDP + H(+). The enzyme catalyses an alpha-Neu5Ac-(2-&gt;3)-beta-D-Gal-(1-&gt;3)-D-GlcNAc derivative + GDP-beta-L-fucose = an alpha-Neu5Ac-(2-&gt;3)-beta-D-Gal-(1-&gt;3)-[alpha-L-Fuc-(1-&gt;4)]-beta-D-GlcNAc derivative + GDP + H(+). It functions in the pathway protein modification; protein glycosylation. Its function is as follows. Catalyzes preferentially the transfer of L-fucose, from a guanosine diphosphate-beta-L-fucose, to the N-acetyl-beta-D-glucosamine (GlcNAc) of an N-acetyllactosamine unit (type 2 chain) of an oligosaccharide, or a glycoprotein- and a glycolipid-linked N-acetyllactosamine unit via an alpha (1,3) linkage and participates in the surface expression of VIM-2, Lewis X/SSEA-1 and sialyl Lewis X antigens. Preferentially transfers fucose to the GlcNAc of an internal N-acetyllactosamine unit of a poly-N-acetyllactosamine chain acceptor substrate. Also catalyzes to a lesser extend the transfer of L-fucose to the GlcNAc of a type 1 (beta-D-galactosyl-(1-&gt;3)-N-acetyl-beta-D-glucosaminyl) or H-type 1 (alpha-L-Fuc-(1-&gt;2)-beta-D-Gal-(1-&gt;3)-D-GlcNAc) chain oligosaccharide via an alpha (1,4) linkage. Preferentially catalyzes sialylated type 2 oligosaccharide acceptors over neutral type 2 or H type 2 (alpha-L-Fuc-(1-&gt;2)-beta-D-Gal-(1-&gt;4)-D-GlcNAc) oligosaccharide acceptors. Lactose-based structures are also acceptor substrates. This chain is 4-galactosyl-N-acetylglucosaminide 3-alpha-L-fucosyltransferase FUT5, found in Homo sapiens (Human).